The primary structure comprises 390 residues: Digeranylgeranylglycerophospholipid reductase (390 aa).

FAD-binding residues include A18, E37, C48, A49, A51, R98, V122, D278, G290, and I291. Residue V368 participates in a 2,3-bis-O-(geranylgeranyl)-sn-glycerol 1-phospholipid binding.

It belongs to the geranylgeranyl reductase family. DGGGPL reductase subfamily. Requires FAD as cofactor.

It catalyses the reaction a 2,3-bis-O-phytanyl-sn-glycerol 1-phospholipid + 8 A = a 2,3-bis-O-(geranylgeranyl)-sn-glycerol 1-phospholipid + 8 AH2. The catalysed reaction is 2,3-bis-O-(phytanyl)-sn-glycerol 1-phosphate + 8 A = 2,3-bis-O-(geranylgeranyl)-sn-glycerol 1-phosphate + 8 AH2. It carries out the reaction CDP-2,3-bis-O-(geranylgeranyl)-sn-glycerol + 8 AH2 = CDP-2,3-bis-O-(phytanyl)-sn-glycerol + 8 A. The enzyme catalyses archaetidylserine + 8 AH2 = 2,3-bis-O-phytanyl-sn-glycero-3-phospho-L-serine + 8 A. It functions in the pathway membrane lipid metabolism; glycerophospholipid metabolism. Its function is as follows. Is involved in the reduction of 2,3-digeranylgeranylglycerophospholipids (unsaturated archaeols) into 2,3-diphytanylglycerophospholipids (saturated archaeols) in the biosynthesis of archaeal membrane lipids. Catalyzes the formation of archaetidic acid (2,3-di-O-phytanyl-sn-glyceryl phosphate) from 2,3-di-O-geranylgeranylglyceryl phosphate (DGGGP) via the hydrogenation of each double bond of the isoprenoid chains. Is also probably able to reduce double bonds of geranyl groups in CDP-2,3-bis-O-(geranylgeranyl)-sn-glycerol and archaetidylserine, thus acting at various stages in the biosynthesis of archaeal membrane lipids. This chain is Digeranylgeranylglycerophospholipid reductase, found in Methanococcus maripaludis (strain C5 / ATCC BAA-1333).